The primary structure comprises 194 residues: Adenylate kinase (194 aa).

ATP is bound at residue 10 to 15 (GAGKGT). The tract at residues 30-59 (STGDMLRAAVKAETEIGKKAKAVMDAGELV) is NMP. Residues threonine 31, arginine 36, 57–59 (ELV), 85–88 (GYPR), and glutamine 92 contribute to the AMP site. The segment at 126 to 142 (KRAEDAQAAGQPVRRDD) is LID. Residue arginine 127 coordinates ATP. Residues arginine 139 and arginine 150 each coordinate AMP. Residue alanine 178 coordinates ATP.

This sequence belongs to the adenylate kinase family. In terms of assembly, monomer.

Its subcellular location is the cytoplasm. The enzyme catalyses AMP + ATP = 2 ADP. It participates in purine metabolism; AMP biosynthesis via salvage pathway; AMP from ADP: step 1/1. Its function is as follows. Catalyzes the reversible transfer of the terminal phosphate group between ATP and AMP. Plays an important role in cellular energy homeostasis and in adenine nucleotide metabolism. The polypeptide is Adenylate kinase (Chelativorans sp. (strain BNC1)).